The primary structure comprises 447 residues: Phosphoglucosamine mutase (447 aa).

Ser-104 acts as the Phosphoserine intermediate in catalysis. Positions 104, 243, 245, and 247 each coordinate Mg(2+). Phosphoserine is present on Ser-104.

This sequence belongs to the phosphohexose mutase family. It depends on Mg(2+) as a cofactor. In terms of processing, activated by phosphorylation.

It carries out the reaction alpha-D-glucosamine 1-phosphate = D-glucosamine 6-phosphate. Catalyzes the conversion of glucosamine-6-phosphate to glucosamine-1-phosphate. This Corynebacterium jeikeium (strain K411) protein is Phosphoglucosamine mutase.